The sequence spans 417 residues: DNA-directed RNA polymerase subunit beta (417 aa).

Belongs to the RNA polymerase beta chain family. In plastids the minimal PEP RNA polymerase catalytic core is composed of four subunits: alpha, beta, beta', and beta''. When a (nuclear-encoded) sigma factor is associated with the core the holoenzyme is formed, which can initiate transcription.

The protein resides in the plastid. It is found in the chloroplast. It carries out the reaction RNA(n) + a ribonucleoside 5'-triphosphate = RNA(n+1) + diphosphate. In terms of biological role, DNA-dependent RNA polymerase catalyzes the transcription of DNA into RNA using the four ribonucleoside triphosphates as substrates. In Saponaria officinalis (Common soapwort), this protein is DNA-directed RNA polymerase subunit beta (rpoB).